Consider the following 443-residue polypeptide: Xaa-Pro dipeptidase (443 aa).

Aspartate 246, aspartate 257, histidine 339, glutamate 384, and glutamate 423 together coordinate Mn(2+).

It belongs to the peptidase M24B family. Bacterial-type prolidase subfamily. Mn(2+) serves as cofactor.

It catalyses the reaction Xaa-L-Pro dipeptide + H2O = an L-alpha-amino acid + L-proline. In terms of biological role, splits dipeptides with a prolyl residue in the C-terminal position. The chain is Xaa-Pro dipeptidase from Enterobacter sp. (strain 638).